Here is a 556-residue protein sequence, read N- to C-terminus: Glutamine--tRNA ligase (556 aa).

Positions 33–43 match the 'HIGH' region motif; that stretch reads PEPNGYLHIGH. ATP contacts are provided by residues 34 to 36 and 40 to 46; these read EPN and HIGHAKS. Asp-66 and Tyr-210 together coordinate L-glutamine. Residues Thr-229, 259–260, and 267–269 each bind ATP; these read RL and MSK. Residues 266–270 carry the 'KMSKS' region motif; that stretch reads VMSKR.

This sequence belongs to the class-I aminoacyl-tRNA synthetase family. In terms of assembly, monomer.

It localises to the cytoplasm. The catalysed reaction is tRNA(Gln) + L-glutamine + ATP = L-glutaminyl-tRNA(Gln) + AMP + diphosphate. The chain is Glutamine--tRNA ligase from Clostridium kluyveri (strain ATCC 8527 / DSM 555 / NBRC 12016 / NCIMB 10680 / K1).